Reading from the N-terminus, the 297-residue chain is ATP synthase gamma chain (297 aa).

Belongs to the ATPase gamma chain family. In terms of assembly, F-type ATPases have 2 components, CF(1) - the catalytic core - and CF(0) - the membrane proton channel. CF(1) has five subunits: alpha(3), beta(3), gamma(1), delta(1), epsilon(1). CF(0) has three main subunits: a, b and c.

It localises to the cell membrane. In terms of biological role, produces ATP from ADP in the presence of a proton gradient across the membrane. The gamma chain is believed to be important in regulating ATPase activity and the flow of protons through the CF(0) complex. This Renibacterium salmoninarum (strain ATCC 33209 / DSM 20767 / JCM 11484 / NBRC 15589 / NCIMB 2235) protein is ATP synthase gamma chain.